The following is a 257-amino-acid chain: UPF0246 protein Spea_1078 (257 aa).

The protein belongs to the UPF0246 family.

The chain is UPF0246 protein Spea_1078 from Shewanella pealeana (strain ATCC 700345 / ANG-SQ1).